The chain runs to 521 residues: 2-isopropylmalate synthase (521 aa).

The region spanning 5–267 is the Pyruvate carboxyltransferase domain; that stretch reads VIIFDTTLRD…HTNIKHQEIH (263 aa). The Mn(2+) site is built by Asp-14, His-202, His-204, and Asn-238. A regulatory domain region spans residues 392 to 521; sequence KLNYLSVQSG…FAQKTVMETL (130 aa).

This sequence belongs to the alpha-IPM synthase/homocitrate synthase family. LeuA type 1 subfamily. In terms of assembly, homodimer. Requires Mn(2+) as cofactor.

It is found in the cytoplasm. It carries out the reaction 3-methyl-2-oxobutanoate + acetyl-CoA + H2O = (2S)-2-isopropylmalate + CoA + H(+). It participates in amino-acid biosynthesis; L-leucine biosynthesis; L-leucine from 3-methyl-2-oxobutanoate: step 1/4. Its function is as follows. Catalyzes the condensation of the acetyl group of acetyl-CoA with 3-methyl-2-oxobutanoate (2-ketoisovalerate) to form 3-carboxy-3-hydroxy-4-methylpentanoate (2-isopropylmalate). In Tolumonas auensis (strain DSM 9187 / NBRC 110442 / TA 4), this protein is 2-isopropylmalate synthase.